We begin with the raw amino-acid sequence, 317 residues long: MSHGPKQPGAAAAPAGGKAPGQHGGFVVTVKQERGEGPRAGEKGSHEEEPVKKRGWPKGKKRKKILPNGPKAPVTGYVRFLNERREQIRTRHPDLPFPEITKMLGAEWSKLQPTEKQRYLDEAEREKQQYMKELRAYQQSEAYKMCTEKIQEKKIKKEDSSSGLMNTLLNGHKGGDCDGFSTFDVPIFTEEFLDQNKAREAELRRLRKMNVAFEEQNAVLQRHTQSMSSARERLEQELALEERRTLALQQQLQAVRQALTASFASLPVPGTGETPTLGTLDFYMARLHGAIERDPAQHEKLIVRIKEILAQVASEHL.

Low complexity predominate over residues 1-17; it reads MSHGPKQPGAAAAPAGG. The disordered stretch occupies residues 1–71; the sequence is MSHGPKQPGA…RKKILPNGPK (71 aa). Lysine 31 is covalently cross-linked (Glycyl lysine isopeptide (Lys-Gly) (interchain with G-Cter in SUMO2)). Positions 31–52 are enriched in basic and acidic residues; sequence KQERGEGPRAGEKGSHEEEPVK. The segment covering 53 to 65 has biased composition (basic residues); it reads KRGWPKGKKRKKI. Positions 70–138 form a DNA-binding region, HMG box; it reads PKAPVTGYVR…QYMKELRAYQ (69 aa). Serine 160 carries the phosphoserine modification. Residues 190–257 are a coiled coil; that stretch reads EEFLDQNKAR…LQQQLQAVRQ (68 aa).

In terms of assembly, component of a BHC histone deacetylase complex that contains HDAC1, HDAC2, HMG20B/BRAF35, KDM1A, RCOR1/CoREST and PHF21A/BHC80. The BHC complex may also contain ZMYM2, ZNF217, ZMYM3, GSE1 and GTF2I. Interacts with the BRCA2 tumor suppressor protein. Interacts with DTNB. As to expression, ubiquitously expressed in adult tissues.

The protein localises to the nucleus. The protein resides in the chromosome. Its function is as follows. Required for correct progression through G2 phase of the cell cycle and entry into mitosis. Required for RCOR1/CoREST mediated repression of neuronal specific gene promoters. This Homo sapiens (Human) protein is SWI/SNF-related matrix-associated actin-dependent regulator of chromatin subfamily E member 1-related (HMG20B).